We begin with the raw amino-acid sequence, 266 residues long: MSIWRPPLHNVPGLEHLWYESVHRSHAAVCGCGDPVRHLTALAERYGIPGGSRSSGAPGVGGNHNPPQIRRARHPAAAPDPPAGNQPPALPWHGDGGNESGAGGGESGGPVADFADDGLDDLVAALDEEERRLQYPRETTKRTETVDERKRERSRSPRRDAGGLGPRAAPAAAPRAVSTPKRAQVPLRAVSQNPTGSPRRSLPRVGPEQWLLPERKPKPAPTSGDWAMEYLMCKIMNRPPRSQLTDPPFYPYCKNNYNVTFQLNYK.

Disordered regions lie at residues 50–116 (GGSR…DFAD) and 128–224 (EEER…PTSG). Residues 78–90 (APDPPAGNQPPAL) show a composition bias toward pro residues. Positions 94-108 (GDGGNESGAGGGESG) are enriched in gly residues. Residues 129–161 (EERRLQYPRETTKRTETVDERKRERSRSPRRDA) show a composition bias toward basic and acidic residues. Over residues 166–176 (PRAAPAAAPRA) the composition is skewed to low complexity.

This is an uncharacterized protein from Homo sapiens (Human).